The following is a 1000-amino-acid chain: Integrin alpha-PS5 (1000 aa).

FG-GAP repeat units lie at residues 15 to 74, 75 to 137, 145 to 198, 199 to 261, 262 to 323, 324 to 379, and 386 to 448; these read KHLK…GSCS, HYVL…DTPP, SLIP…AAQG, SYAV…GEIV, RKLH…FKFE, KKII…GLRD, and DAPS…SESR. An N-linked (GlcNAc...) asparagine glycan is attached at Asn58. Asn231 carries N-linked (GlcNAc...) asparagine glycosylation. Residues Asn516, Asn592, Asn622, Asn732, Asn771, Asn829, Asn842, Asn853, and Asn922 are each glycosylated (N-linked (GlcNAc...) asparagine). The helical transmembrane segment at 930-950 threads the bilayer; that stretch reads IWYIILSLIAGHLLLGAMTYI. The Cytoplasmic portion of the chain corresponds to 951–1000; the sequence is LYKLRFFKRGKKEELKRLLEEHRSETKEPATDCEGNQEEINVEMHSDLEN. Positions 971–980 are enriched in basic and acidic residues; that stretch reads EHRSETKEPA. Positions 971–1000 are disordered; it reads EHRSETKEPATDCEGNQEEINVEMHSDLEN.

The protein belongs to the integrin alpha chain family. Heterodimer of an alpha and a beta subunit. Alpha-PS5 associates with beta-PS. In terms of tissue distribution, expressed in all follicle cells overlying the oocyte during mid-oogenesis, the strongest expression is observed in the cells covering the anterior end of the oocyte and in the cells forming the dorsal appendages. After completion of oocyte enlargement, expression in main body follicle cells is down-regulated but persists strongly in the dorsal appendage forming cells. Expressed in lamellocytes.

It localises to the membrane. Functionally, possible role in cell-cell interactions. Minor involvement in the establishment of the oocyte anterior-posterior length. The polypeptide is Integrin alpha-PS5 (Drosophila melanogaster (Fruit fly)).